We begin with the raw amino-acid sequence, 377 residues long: Succinyl-diaminopimelate desuccinylase 2 (377 aa).

Residue histidine 62 coordinates Zn(2+). Residue aspartate 64 is part of the active site. Aspartate 95 contacts Zn(2+). Glutamate 129 (proton acceptor) is an active-site residue. Positions 130, 158, and 350 each coordinate Zn(2+).

It belongs to the peptidase M20A family. DapE subfamily. As to quaternary structure, homodimer. Requires Zn(2+) as cofactor. Co(2+) is required as a cofactor.

The catalysed reaction is N-succinyl-(2S,6S)-2,6-diaminopimelate + H2O = (2S,6S)-2,6-diaminopimelate + succinate. It functions in the pathway amino-acid biosynthesis; L-lysine biosynthesis via DAP pathway; LL-2,6-diaminopimelate from (S)-tetrahydrodipicolinate (succinylase route): step 3/3. Catalyzes the hydrolysis of N-succinyl-L,L-diaminopimelic acid (SDAP), forming succinate and LL-2,6-diaminopimelate (DAP), an intermediate involved in the bacterial biosynthesis of lysine and meso-diaminopimelic acid, an essential component of bacterial cell walls. This chain is Succinyl-diaminopimelate desuccinylase 2, found in Shewanella loihica (strain ATCC BAA-1088 / PV-4).